A 199-amino-acid polypeptide reads, in one-letter code: uncharacterized protein (199 aa).

This is an uncharacterized protein from Borreliella burgdorferi (strain ATCC 35210 / DSM 4680 / CIP 102532 / B31) (Borrelia burgdorferi).